A 57-amino-acid chain; its full sequence is Sperm protamine P1-type (57 aa).

The disordered stretch occupies residues 1–57; it reads MARYRHNRSRSRSRHRRRRRGHRGGRYRRRRRRGRYGHRRHHRGHSRRRRKRRRSRH.

Belongs to the protamine P1 family. In terms of tissue distribution, testis.

The protein resides in the nucleus. The protein localises to the chromosome. Its function is as follows. Protamines substitute for histones in the chromatin of sperm during the haploid phase of spermatogenesis. They compact sperm DNA into a highly condensed, stable and inactive complex. This chain is Sperm protamine P1-type, found in Alligator mississippiensis (American alligator).